Consider the following 414-residue polypeptide: Peptidoglycan beta-N-acetylmuramidase NamZ (414 aa).

A signal peptide spans 1 to 23; sequence MRKTIFAFLTGLMMFGTITAASA.

Belongs to the glycoside hydrolase 171 family. As to quaternary structure, homodimer in solution.

The protein localises to the secreted. The catalysed reaction is Hydrolysis of terminal, non-reducing N-acetylmuramic residues.. Functionally, catalyzes the exo-lytic cleavage of beta-1,4-N-acetylmuramate (beta-1,4-MurNAc) from the non-reducing ends of peptidoglycan chains. Specifically hydrolyzes the natural, peptidoglycan-derived disaccharide MurNAc-GlcNAc and the artificial substrate para-nitrophenyl beta-N-acetylmuramic acid (pNP-MurNAc). Requires a MurNAc entity at the non-reducing end, and cannot cleave GlcNAc-MurNAc. Probably plays a role in cell wall turnover and recycling. The chain is Peptidoglycan beta-N-acetylmuramidase NamZ from Bacillus subtilis (strain 168).